Here is a 322-residue protein sequence, read N- to C-terminus: Ribose 1,5-bisphosphate isomerase (322 aa).

Substrate contacts are provided by residues 20–23 (RGAG) and Arg-63. Cys-133 functions as the Proton acceptor in the catalytic mechanism. 135 to 137 (SKA) is a substrate binding site. Residue Asp-202 is the Proton donor of the active site. Residues 212–213 (NK) and Lys-238 each bind substrate.

This sequence belongs to the eIF-2B alpha/beta/delta subunits family. R15P isomerase subfamily. As to quaternary structure, homohexamer; trimer of dimers.

It carries out the reaction alpha-D-ribose 1,5-bisphosphate = D-ribulose 1,5-bisphosphate. With respect to regulation, is highly activated in the presence of AMP, with an increase of &gt;40-fold in activity levels. Among other nucleotides, isomerase activity is slightly increased in the presence of GMP, but CMP, UMP, TMP, and NAD(+) have no effect; therefore, AMP is likely the major activator of R15P isomerase in vivo. To a lesser extent, various compounds with an adenosyl moiety, such as dAMP, adenosine, or methylthioadenosine, can also act as activators. The regulation of this enzyme by AMP prevents excess degradation of intracellular AMP by the archaeal AMP degradation pathway. Its function is as follows. Catalyzes the isomerization of ribose 1,5-bisphosphate (R15P) to ribulose 1,5-bisphosphate (RuBP), the CO(2) acceptor and substrate for RubisCO. Only accepts the alpha-anomer of D-ribose 1,5-bisphosphate as substrate, being inactive on the beta-anomer. Displays a strict substrate specificity, since other phosphorylated sugars such as R5P, ribose, G16P, G6P, G1P, FBP, F6P, and PRPP, are not substrates. Functions in an archaeal AMP degradation pathway, together with AMP phosphorylase and RubisCO. The protein is Ribose 1,5-bisphosphate isomerase of Thermococcus kodakarensis (strain ATCC BAA-918 / JCM 12380 / KOD1) (Pyrococcus kodakaraensis (strain KOD1)).